Reading from the N-terminus, the 326-residue chain is Fos-related antigen 2 (326 aa).

Met1 bears the N-acetylmethionine mark. The segment at 1–39 (MYQDYPGNFDTSSRGSSGSPAHAESYSSGGGGQQKFRVD) is disordered. The segment covering 9 to 19 (FDTSSRGSSGS) has biased composition (polar residues). Lys35 is covalently cross-linked (Glycyl lysine isopeptide (Lys-Gly) (interchain with G-Cter in SUMO2)). An N6-acetyllysine; alternate modification is found at Lys104. Residue Lys104 forms a Glycyl lysine isopeptide (Lys-Gly) (interchain with G-Cter in SUMO2); alternate linkage. Disordered regions lie at residues 111–131 (GRRR…RIRR), 193–244 (ISPE…QRSV), and 289–326 (EQES…LLAL). The residue at position 120 (Ser120) is a Phosphoserine. The bZIP domain occupies 124–187 (EEKRRIRRER…EKLEFMLVAH (64 aa)). The basic motif stretch occupies residues 126–128 (KRR). Positions 129-136 (IRRERNKL) are leucine-zipper. Ser200 is subject to Phosphoserine. The span at 201–211 (PPTSGLQSLRG) shows a compositional bias: polar residues. Lys222 participates in a covalent cross-link: Glycyl lysine isopeptide (Lys-Gly) (interchain with G-Cter in SUMO2); alternate. Lys222 is covalently cross-linked (Glycyl lysine isopeptide (Lys-Gly) (interchain with G-Cter in SUMO1); alternate). A Phosphoserine modification is found at Ser230. Residue Lys239 forms a Glycyl lysine isopeptide (Lys-Gly) (interchain with G-Cter in SUMO2) linkage. Ser308 and Ser320 each carry phosphoserine. The span at 308-320 (SSSGDQSSDSLNS) shows a compositional bias: low complexity.

Belongs to the bZIP family. Fos subfamily. Heterodimer. Interacts with the BAF multiprotein chromatin-remodeling complex subunits SMARCB1 and SMARCD1. Interacts with ARID1A and JUN. Expressed in the brain cortex. Expressed at night in pineal gland (at protein level). Also expressed in osteoblasts (at protein level).

The protein resides in the nucleus. In terms of biological role, controls osteoclast survival and size. As a dimer with JUN, activates LIF transcription. Activates CEBPB transcription in PGE2-activated osteoblasts. In Rattus norvegicus (Rat), this protein is Fos-related antigen 2 (Fosl2).